A 684-amino-acid chain; its full sequence is TBC1 domain family member 12 (684 aa).

Disordered regions lie at residues 1 to 41 (MVGP…RQTD), 119 to 138 (VPSPGTPPGSSPISSSSSSP), 169 to 202 (TFEGSRRQSAPDHLADGLSLPAESPGTAEQDGDR), and 219 to 290 (KRTK…SQST). Acidic residues predominate over residues 25-34 (AADEEEGEGE). The span at 129 to 138 (SPISSSSSSP) shows a compositional bias: low complexity. Composition is skewed to basic and acidic residues over residues 172–183 (GSRRQSAPDHLA) and 240–250 (PPRETAQKDSK). Positions 331–365 (EMVAEAKKREVKEAQRRKKLMKERIRQEENIASAM) form a coiled coil. A Rab-GAP TBC domain is found at 392–602 (GLPPSIRGKV…RVWDVFCRDG (211 aa)).

May act as a GTPase-activating protein for Rab family protein(s). This chain is TBC1 domain family member 12 (tbc1d12), found in Xenopus tropicalis (Western clawed frog).